Consider the following 372-residue polypeptide: Cytochrome b (372 aa).

4 helical membrane passes run 25–45 (FGSMLLTCTALQTTTGFFLAI), 69–90 (WIMQNIHATGASMFFICIYIHI), 105–125 (WVSGTTLLVTLMATAFFGYVL), and 170–190 (FFALHFILPFIIISTSLIHVM). Positions 75 and 89 each coordinate heme b. Positions 174 and 188 each coordinate heme b. His193 lines the a ubiquinone pocket. The next 4 helical transmembrane spans lie at 218–238 (YKDTLMLTTLLTLLFITTSFF), 280–300 (LGGTMALVMSIIILLTAPFTH), 312–332 (MAQVLFWTFIATFMLITWAAT), and 339–358 (FTTIGLSTSILYFSFFIINP).

This sequence belongs to the cytochrome b family. In terms of assembly, the cytochrome bc1 complex contains 3 respiratory subunits (MT-CYB, CYC1 and UQCRFS1), 2 core proteins (UQCRC1 and UQCRC2) and probably 6 low-molecular weight proteins. Heme b serves as cofactor.

It is found in the mitochondrion inner membrane. Component of the ubiquinol-cytochrome c reductase complex (complex III or cytochrome b-c1 complex) that is part of the mitochondrial respiratory chain. The b-c1 complex mediates electron transfer from ubiquinol to cytochrome c. Contributes to the generation of a proton gradient across the mitochondrial membrane that is then used for ATP synthesis. This chain is Cytochrome b (MT-CYB), found in Heterodon simus (Southern hognose snake).